Consider the following 457-residue polypeptide: Transcription factor PCF7 (457 aa).

Positions 58 to 84 (STLHYLLQEKERAQQAHEQLQIYQQQQ) form a coiled coil. The interval 95–121 (RQPASRGPGGGGGGGDGGGSSGESTPV) is disordered. The span at 101–115 (GPGGGGGGGDGGGSS) shows a compositional bias: gly residues. The region spanning 140-198 (RKDRHSKVCTARGLRDRRVRLAAHTAIRFYDVQDRLGYDRPSKAVDWLMRNAKAAIDEL) is the TCP domain. 2 disordered regions span residues 199–231 (PDRA…GFGN) and 263–299 (KSLF…SNQQ). Polar residues predominate over residues 212–230 (STEQPEGTEQANSTSYGFG). The span at 268 to 278 (SSSTASGAASA) shows a compositional bias: low complexity.

As to quaternary structure, forms homodimers and heterodimers.

The protein resides in the nucleus. Transcription activator. Binds the promoter core sequence 5'-GGNCC-3'. This Oryza sativa subsp. indica (Rice) protein is Transcription factor PCF7 (PCF7).